We begin with the raw amino-acid sequence, 368 residues long: Zinc finger protein 24 (368 aa).

Lysine 22 participates in a covalent cross-link: Glycyl lysine isopeptide (Lys-Gly) (interchain with G-Cter in SUMO2). A Glycyl lysine isopeptide (Lys-Gly) (interchain with G-Cter in SUMO1); alternate cross-link involves residue lysine 27. Residue lysine 27 forms a Glycyl lysine isopeptide (Lys-Gly) (interchain with G-Cter in SUMO2); alternate linkage. One can recognise an SCAN box domain in the interval arginine 52–leucine 134. Serine 132 and serine 142 each carry phosphoserine. Glycyl lysine isopeptide (Lys-Gly) (interchain with G-Cter in SUMO2) cross-links involve residues lysine 147, lysine 177, and lysine 236. Residues histidine 251 to histidine 273 form a C2H2-type 1 zinc finger. Positions histidine 251–histidine 301 are necessary and sufficient for nuclear localization. The residue at position 274 (serine 274) is a Phosphoserine. Residues lysine 277 and lysine 286 each participate in a glycyl lysine isopeptide (Lys-Gly) (interchain with G-Cter in SUMO2) cross-link. C2H2-type zinc fingers lie at residues tyrosine 279–histidine 301, tyrosine 307–histidine 329, and tyrosine 335–histidine 357. A Phosphoserine modification is found at serine 292. Residue tyrosine 335 is modified to Phosphotyrosine. Residues lysine 361 and lysine 367 each participate in a glycyl lysine isopeptide (Lys-Gly) (interchain with G-Cter in SUMO2) cross-link.

This sequence belongs to the krueppel C2H2-type zinc-finger protein family. In terms of processing, sumoylated. As to expression, widely expressed with highest levels in heart, brain, liver, skeletal muscle, kidney and testis and very low levels in spleen and lung.

It localises to the nucleus. Transcription factor required for myelination of differentiated oligodendrocytes. Required for the conversion of oligodendrocytes from the premyelinating to the myelinating state. In the developing central nervous system (CNS), involved in the maintenance in the progenitor stage by promoting the cell cycle. Specifically binds to the 5'-TCAT-3' DNA sequence. Has transcription repressor activity in vitro. The polypeptide is Zinc finger protein 24 (Mus musculus (Mouse)).